A 138-amino-acid polypeptide reads, in one-letter code: Putative pre-16S rRNA nuclease (138 aa).

The protein belongs to the YqgF nuclease family.

Its subcellular location is the cytoplasm. Functionally, could be a nuclease involved in processing of the 5'-end of pre-16S rRNA. The polypeptide is Putative pre-16S rRNA nuclease (Clostridium tetani (strain Massachusetts / E88)).